The primary structure comprises 310 residues: Ribosomal RNA small subunit methyltransferase H (310 aa).

S-adenosyl-L-methionine is bound by residues 35–37 (GGH), Asp52, Phe79, Asp100, and Gln107.

It belongs to the methyltransferase superfamily. RsmH family.

The protein localises to the cytoplasm. The enzyme catalyses cytidine(1402) in 16S rRNA + S-adenosyl-L-methionine = N(4)-methylcytidine(1402) in 16S rRNA + S-adenosyl-L-homocysteine + H(+). Its function is as follows. Specifically methylates the N4 position of cytidine in position 1402 (C1402) of 16S rRNA. This chain is Ribosomal RNA small subunit methyltransferase H, found in Anaeromyxobacter sp. (strain K).